The chain runs to 455 residues: Beta-1,3-galactosyl-O-glycosyl-glycoprotein beta-1,6-N-acetylglucosaminyltransferase 4 (455 aa).

The Cytoplasmic segment spans residues 1–13 (MKIFRCCFKYTLQ). A helical; Signal-anchor for type II membrane protein membrane pass occupies residues 14 to 34 (QKLFILLLTLWLFSLLKLLNV). At 35–455 (GRLLFPQRDI…TEGTRQSHTL (421 aa)) the chain is on the lumenal side. Asparagine 73 carries an N-linked (GlcNAc...) asparagine glycan. Cystine bridges form between cysteine 74-cysteine 228, cysteine 162-cysteine 383, cysteine 183-cysteine 210, and cysteine 392-cysteine 424. Asparagine 287 and asparagine 382 each carry an N-linked (GlcNAc...) asparagine glycan.

It belongs to the glycosyltransferase 14 family.

Its subcellular location is the golgi apparatus membrane. The enzyme catalyses a 3-O-[beta-D-galactosyl-(1-&gt;3)-N-acetyl-alpha-D-galactosaminyl]-L-seryl-[protein] + UDP-N-acetyl-alpha-D-glucosamine = 3-O-{beta-D-galactosyl-(1-&gt;3)-[N-acetyl-beta-D-glucosaminyl-(1-&gt;6)]-N-acetyl-alpha-D-galactosaminyl}-L-seryl-[protein] + UDP + H(+). It carries out the reaction a 3-O-[beta-D-galactosyl-(1-&gt;3)-N-acetyl-alpha-D-galactosaminyl]-L-threonyl-[protein] + UDP-N-acetyl-alpha-D-glucosamine = a 3-O-{beta-D-galactosyl-(1-&gt;3)-[N-acetyl-beta-D-glucosaminyl-(1-&gt;6)]-N-acetyl-alpha-D-galactosaminyl}-L-threonyl-[protein] + UDP + H(+). It functions in the pathway protein modification; protein glycosylation. Functionally, glycosyltransferase that mediates core 2 O-glycan branching, an important step in mucin-type biosynthesis. Does not have core 4 O-glycan or I-branching enzyme activity. This chain is Beta-1,3-galactosyl-O-glycosyl-glycoprotein beta-1,6-N-acetylglucosaminyltransferase 4 (Gcnt4), found in Mus musculus (Mouse).